The sequence spans 436 residues: 3-ketoacyl-CoA thiolase (436 aa).

The active-site Acyl-thioester intermediate is the C99. Active-site proton acceptor residues include H392 and C422.

Belongs to the thiolase-like superfamily. Thiolase family. As to quaternary structure, heterotetramer of two alpha chains (FadJ) and two beta chains (FadI).

Its subcellular location is the cytoplasm. It catalyses the reaction an acyl-CoA + acetyl-CoA = a 3-oxoacyl-CoA + CoA. Its pathway is lipid metabolism; fatty acid beta-oxidation. Functionally, catalyzes the final step of fatty acid oxidation in which acetyl-CoA is released and the CoA ester of a fatty acid two carbons shorter is formed. This is 3-ketoacyl-CoA thiolase from Escherichia coli (strain ATCC 8739 / DSM 1576 / NBRC 3972 / NCIMB 8545 / WDCM 00012 / Crooks).